The following is a 310-amino-acid chain: Protoheme IX farnesyltransferase 2 (310 aa).

9 helical membrane passes run 25–45 (PGII…AAKG), 49–69 (LVLM…GCAI), 87–107 (RVTV…LALG), 120–139 (ALAL…VYSL), 145–165 (SVYG…VGYC), 176–196 (AILL…IAIF), 220–240 (LHIV…PLAG), 242–262 (TGIA…AMAL), and 277–297 (QVFG…ALDF).

This sequence belongs to the UbiA prenyltransferase family. Protoheme IX farnesyltransferase subfamily.

The protein localises to the cell inner membrane. The enzyme catalyses heme b + (2E,6E)-farnesyl diphosphate + H2O = Fe(II)-heme o + diphosphate. Its pathway is porphyrin-containing compound metabolism; heme O biosynthesis; heme O from protoheme: step 1/1. In terms of biological role, converts heme B (protoheme IX) to heme O by substitution of the vinyl group on carbon 2 of heme B porphyrin ring with a hydroxyethyl farnesyl side group. The polypeptide is Protoheme IX farnesyltransferase 2 (Shewanella baltica (strain OS185)).